The following is a 403-amino-acid chain: O-succinylhomoserine sulfhydrylase (403 aa).

Lys219 bears the N6-(pyridoxal phosphate)lysine mark.

Belongs to the trans-sulfuration enzymes family. MetZ subfamily. In terms of assembly, homotetramer. Requires pyridoxal 5'-phosphate as cofactor.

It catalyses the reaction O-succinyl-L-homoserine + hydrogen sulfide = L-homocysteine + succinate. Its pathway is amino-acid biosynthesis; L-methionine biosynthesis via de novo pathway; L-homocysteine from O-succinyl-L-homoserine: step 1/1. In terms of biological role, catalyzes the formation of L-homocysteine from O-succinyl-L-homoserine (OSHS) and hydrogen sulfide. Cannot use the other activated form of L-homoserine, O-acetyl-L-homoserine, as a substrate. This is O-succinylhomoserine sulfhydrylase from Pseudomonas aeruginosa (strain ATCC 15692 / DSM 22644 / CIP 104116 / JCM 14847 / LMG 12228 / 1C / PRS 101 / PAO1).